Reading from the N-terminus, the 276-residue chain is NH(3)-dependent NAD(+) synthetase (276 aa).

47–54 (GISGGQDS) provides a ligand contact to ATP. Asp-53 contributes to the Mg(2+) binding site. Arg-141 serves as a coordination point for deamido-NAD(+). An ATP-binding site is contributed by Thr-161. Glu-166 contacts Mg(2+). Deamido-NAD(+) contacts are provided by Lys-174 and Asp-181. Residues Lys-190 and Thr-212 each contribute to the ATP site. 261–262 (HK) is a deamido-NAD(+) binding site.

The protein belongs to the NAD synthetase family. As to quaternary structure, homodimer.

It carries out the reaction deamido-NAD(+) + NH4(+) + ATP = AMP + diphosphate + NAD(+) + H(+). It participates in cofactor biosynthesis; NAD(+) biosynthesis; NAD(+) from deamido-NAD(+) (ammonia route): step 1/1. Catalyzes the ATP-dependent amidation of deamido-NAD to form NAD. Uses ammonia as a nitrogen source. The polypeptide is NH(3)-dependent NAD(+) synthetase (Levilactobacillus brevis (strain ATCC 367 / BCRC 12310 / CIP 105137 / JCM 1170 / LMG 11437 / NCIMB 947 / NCTC 947) (Lactobacillus brevis)).